Consider the following 530-residue polypeptide: Protein SLOW WALKER 1 (530 aa).

WD repeat units follow at residues N50–R89, S91–T130, S133–D173, G176–I216, N220–C258, S262–S304, and G320–R363. Positions E392–T399 match the Nuclear localization signal motif.

In terms of tissue distribution, expressed in cells undergoing active cell divisions, including functional megaspores and the female gametophytic cells. Accumulates in roots, stems, leaves, inflorescences and siliques.

It is found in the nucleus. The protein localises to the nucleolus. Essential protein required for nuclear division and organization during embryo sac development in female gametophyte, probably by promoting rRNA biogenesis essential for the progression of the mitotic division cycles during gametogenesis. Involved in nucleolar processing of pre-18S ribosomal RNA. The polypeptide is Protein SLOW WALKER 1 (Arabidopsis thaliana (Mouse-ear cress)).